The sequence spans 484 residues: T-complex protein 1 subunit delta (484 aa).

This sequence belongs to the TCP-1 chaperonin family. Component of the T-complex protein 1 (TCP1) complex.

It localises to the cytoplasm. Functionally, molecular chaperone; assists the folding of proteins upon ATP hydrolysis. In Encephalitozoon cuniculi (strain GB-M1) (Microsporidian parasite), this protein is T-complex protein 1 subunit delta (CCT4).